The chain runs to 277 residues: Probable endonuclease 4 (277 aa).

Positions 70, 108, 143, 176, 179, 210, 223, 225, and 255 each coordinate Zn(2+).

Belongs to the AP endonuclease 2 family. The cofactor is Zn(2+).

The enzyme catalyses Endonucleolytic cleavage to 5'-phosphooligonucleotide end-products.. Its function is as follows. Endonuclease IV plays a role in DNA repair. It cleaves phosphodiester bonds at apurinic or apyrimidinic (AP) sites, generating a 3'-hydroxyl group and a 5'-terminal sugar phosphate. The polypeptide is Probable endonuclease 4 (Mycoplasmopsis synoviae (strain 53) (Mycoplasma synoviae)).